Here is a 413-residue protein sequence, read N- to C-terminus: Putative tRNA pseudouridine synthase C16C4.06c (413 aa).

Aspartate 96 (nucleophile) is an active-site residue. Residue tyrosine 154 coordinates substrate.

It belongs to the tRNA pseudouridine synthase TruA family.

The protein resides in the cytoplasm. The protein localises to the nucleus. It carries out the reaction a uridine in tRNA = a pseudouridine in tRNA. The polypeptide is Putative tRNA pseudouridine synthase C16C4.06c (Schizosaccharomyces pombe (strain 972 / ATCC 24843) (Fission yeast)).